The following is a 151-amino-acid chain: Probable cGMP 3',5'-cyclic phosphodiesterase subunit delta (151 aa).

It belongs to the PDE6D/unc-119 family. Interacts with Pde6.

It localises to the nucleus. The protein localises to the cytoplasm. In Anopheles gambiae (African malaria mosquito), this protein is Probable cGMP 3',5'-cyclic phosphodiesterase subunit delta.